Reading from the N-terminus, the 352-residue chain is Sphingosine 1-phosphate receptor 2 (352 aa).

The Extracellular segment spans residues 1 to 34 (MGGLYSEYLNPEKVQEHYNYTKETLDMQETPSRK). Residue Asn19 is glycosylated (N-linked (GlcNAc...) asparagine). A helical transmembrane segment spans residues 35-59 (VASAFIIILCCAIVVENLLVLIAVA). Topologically, residues 60 to 66 (RNSKFHS) are cytoplasmic. The chain crosses the membrane as a helical span at residues 67-95 (AMYLFLGNLAASDLLAGVAFVANTLLSGP). Residues 96 to 109 (VTLSLTPLQWFARE) are Extracellular-facing. A helical transmembrane segment spans residues 110 to 128 (GSAFITLSASVFSLLAIAI). Residues 129–147 (ERQVAIAKVKLYGSDKSCR) are Cytoplasmic-facing. The helical transmembrane segment at 148 to 173 (MLMLIGASWLISLILGGLPILGWNCL) threads the bilayer. Residues 174–189 (DHLEACSTVLPLYAKH) are Extracellular-facing. Residues 190 to 210 (YVLCVVTIFSVILLAIVALYV) traverse the membrane as a helical segment. The Cytoplasmic segment spans residues 211–233 (RIYFVVRSSHADVAGPQTLALLK). A helical membrane pass occupies residues 234–255 (TVTIVLGVFIICWLPAFSILLL). Residues 256–271 (DSTCPVRACPVLYKAH) lie on the Extracellular side of the membrane. The chain crosses the membrane as a helical span at residues 272–292 (YFFAFATLNSLLNPVIYTWRS). The Cytoplasmic portion of the chain corresponds to 293-352 (RDLRREVLRPLLCWRQGKGATGRRGGNPGHRLLPLRSSSSLERGLHMPTSPTFLEGNTVV). Cys305 carries S-palmitoyl cysteine lipidation.

Belongs to the G-protein coupled receptor 1 family. In terms of tissue distribution, expressed in all developing tissues with highest levels detected in primitive, transformed cells. Relative abundance: lung &gt; kidney = skin = gut &gt; spleen &gt; brain &gt; liver.

The protein resides in the cell membrane. Functionally, receptor for the lysosphingolipid sphingosine 1-phosphate (S1P). S1P is a bioactive lysophospholipid that elicits diverse physiological effects on most types of cells and tissues. Receptor for the chemokine-like protein FAM19A5. Mediates the inhibitory effect of FAM19A5 on vascular smooth muscle cell proliferation and migration. In lymphoid follicles, couples the binding of S1P to the activation of GNA13 and downstream inhibition of AKT activation leading to suppression of germinal center (GC) B cell growth and migration outside the GC niche. This Rattus norvegicus (Rat) protein is Sphingosine 1-phosphate receptor 2 (S1pr2).